We begin with the raw amino-acid sequence, 94 residues long: Small nuclear ribonucleoprotein E (94 aa).

In terms of domain architecture, Sm spans 14–94 (INCIFNFLQQ…DNITLITSAD (81 aa)).

The protein belongs to the snRNP Sm proteins family. Component of the Sm core complex, present in spliceosomal snRNP U1, U2, U4/U6 and U5. The core complex contains SMB1, SMD1, SMD2, SMD3, SME1, SMX3 and SMX2 (Sm proteins B, D1, D2, D3, E, F and G, respectively), and is probably a heptameric ring structure. SME1 specifically interacts with SMX2 and SMX3. Component of the U4/U6-U5 tri-snRNP complex composed of the U4, U6 and U5 snRNAs and at least PRP3, PRP4, PRP6, PRP8, PRP18, PRP31, PRP38, SNU13, SNU23, SNU66, SNU114, SPP381, SMB1, SMD1, SMD2, SMD3, SMX2, SMX3, LSM2, LSM3, LSM4, LSM5, LSM6, LSM7, LSM8, BRR2 and DIB1.

Its subcellular location is the cytoplasm. The protein resides in the nucleus. In terms of biological role, involved in pre-mRNA splicing. Binds and is required for the stability of snRNA U1, U2, U4 and U5 which contain a highly conserved structural motif called the Sm binding site. Involved in cap modification. The polypeptide is Small nuclear ribonucleoprotein E (SME1) (Saccharomyces cerevisiae (strain ATCC 204508 / S288c) (Baker's yeast)).